A 63-amino-acid polypeptide reads, in one-letter code: Large ribosomal subunit protein bL28 (63 aa).

It belongs to the bacterial ribosomal protein bL28 family.

This Treponema denticola (strain ATCC 35405 / DSM 14222 / CIP 103919 / JCM 8153 / KCTC 15104) protein is Large ribosomal subunit protein bL28.